The primary structure comprises 835 residues: Peptide transporter family 1 (835 aa).

11 consecutive transmembrane segments (helical) span residues 86–106 (IFFNGFTVLCYTTPLLGSIVA), 113–133 (FWTIFSVSILYAIGQVVLALA), 150–170 (GLLIIAFGTGGIKPCVSAFGG), 183–203 (LFFSMFYFSINAGSMISTFIS), 222–242 (FGIPAILMIVATLVFMGGSFW), 325–345 (MFLPVPMFWALYDQQGSVWLI), 368–388 (LNAVLILLFIPLFQVIIYPVA), 401–421 (VTGGLLASLAFLITGFVQLQV), 697–717 (ILWQIPQIVVITAAEILFSIT), 738–758 (WLLTTAAGDSIIVVITILNLF), and 765–785 (FFVYAAAMFVVIAIFALLSIF). Positions 814–835 (PRYSIDNKGFHPDEKDTFDMHF) are disordered. The segment covering 821 to 835 (KGFHPDEKDTFDMHF) has biased composition (basic and acidic residues).

It belongs to the major facilitator superfamily. Proton-dependent oligopeptide transporter (POT/PTR) (TC 2.A.17) family. As to expression, expressed specifically in the intestine.

Its subcellular location is the apical cell membrane. Low-affinity peptide transporter that is necessary for proton-dependent uptake of di- or tripeptides, and to a minor extent tetrapeptides, in the intestine. Transport is independent of sodium and chloride ions. Controls the uptake of dietary fatty acids, plays a role in fatty acid synthesis and is responsible for dipeptide-induced acidification of the intestine. Regulates cellular pH differences together with the antiporter protein, nhx-2. Amino acid uptake and absorption levels influence the insulin signaling/daf-2 and let-363/TOR pathways, subsequently affecting the stress response and longevity of the organism. It is required for the uptake of the L-enantiomers of various amino acids, including L-glutamate. In response to the availability of amino acid nutrients, may play a role in promoting reproduction and fertility. The sequence is that of Peptide transporter family 1 from Caenorhabditis elegans.